We begin with the raw amino-acid sequence, 282 residues long: Endonuclease V (282 aa).

Positions 52 and 126 each coordinate Mg(2+). The segment at 250-282 is disordered; it reads SLGLPGPPTPRSPKAQRPVACPKGDSGESSALC.

Belongs to the endonuclease V family. As to quaternary structure, monomer. Interacts with PABPC1; the interaction is RNA-dependent and stimulates ENDOV activity. Mg(2+) is required as a cofactor.

The protein resides in the cytoplasm. The protein localises to the nucleus. Its subcellular location is the nucleolus. It is found in the stress granule. Inhibited by normal intracellular concentrations of ATP. Its function is as follows. Endoribonuclease that specifically cleaves inosine-containing RNAs: cleaves RNA at the second phosphodiester bond 3' to inosine. Active against both single-stranded and double-stranded RNAs. Has strong preference for single-stranded RNAs (ssRNAs) toward double-stranded RNAs (dsRNAs). Cleaves mRNAs and tRNAs containing inosine. Also able to cleave structure-specific dsRNA substrates containing the specific sites 5'-IIUI-3' and 5'-UIUU-3'. Inosine is present in a number of RNAs following editing; the function of inosine-specific endoribonuclease is still unclear: it could either play a regulatory role in edited RNAs, or be involved in antiviral response by removing the hyperedited long viral dsRNA genome that has undergone A-to-I editing. Binds branched DNA structures. In terms of biological role, endoribonuclease that specifically cleaves inosine-containing RNAs: cleaves RNA at the second phosphodiester bond 3' to inosine. Active against both single-stranded and double-stranded RNAs. Cleaves tRNAs containing inosine. This is Endonuclease V (ENDOV) from Homo sapiens (Human).